We begin with the raw amino-acid sequence, 134 residues long: Cytochrome b (134 aa).

The next 3 membrane-spanning stretches (helical) occupy residues 33 to 53 (FGSLLGVCLGVQILTGLFLAM), 77 to 98 (WLLRYLHANGASMFFICLYLHV), and 113 to 133 (WNIGILLLFAVMATDFMGYVL). Heme b contacts are provided by His-83 and His-97.

This sequence belongs to the cytochrome b family. In terms of assembly, the cytochrome bc1 complex contains 11 subunits: 3 respiratory subunits (MT-CYB, CYC1 and UQCRFS1), 2 core proteins (UQCRC1 and UQCRC2) and 6 low-molecular weight proteins (UQCRH/QCR6, UQCRB/QCR7, UQCRQ/QCR8, UQCR10/QCR9, UQCR11/QCR10 and a cleavage product of UQCRFS1). This cytochrome bc1 complex then forms a dimer. Heme b serves as cofactor.

Its subcellular location is the mitochondrion inner membrane. In terms of biological role, component of the ubiquinol-cytochrome c reductase complex (complex III or cytochrome b-c1 complex) that is part of the mitochondrial respiratory chain. The b-c1 complex mediates electron transfer from ubiquinol to cytochrome c. Contributes to the generation of a proton gradient across the mitochondrial membrane that is then used for ATP synthesis. The sequence is that of Cytochrome b (MT-CYB) from Sturnira tildae (Tilda's yellow-shouldered bat).